Reading from the N-terminus, the 432-residue chain is Neuronal pentraxin-2 (432 aa).

A signal peptide spans 1 to 14 (MLALLTAGVALAVA). N-linked (GlcNAc...) asparagine glycosylation is found at asparagine 149 and asparagine 190. A Pentraxin (PTX) domain is found at 224 to 425 (DAFKVSLPLR…GASKWPVETC (202 aa)). A disulfide bridge connects residues cysteine 254 and cysteine 314. Ca(2+) contacts are provided by asparagine 278, glutamate 356, glutamine 357, aspartate 358, and glutamine 368. The N-linked (GlcNAc...) asparagine glycan is linked to asparagine 394.

In terms of assembly, homooligomer or heterooligomer (probably pentamer) with neuronal pentraxin receptor (NPTXR). The cofactor is Ca(2+).

It is found in the secreted. Likely to play role in the modification of cellular properties that underlie long-term plasticity. Binds to agar matrix in a calcium-dependent manner. The polypeptide is Neuronal pentraxin-2 (Nptx2) (Rattus norvegicus (Rat)).